The primary structure comprises 372 residues: 4-hydroxy-3-methylbut-2-en-1-yl diphosphate synthase (flavodoxin) (372 aa).

[4Fe-4S] cluster contacts are provided by cysteine 270, cysteine 273, cysteine 305, and glutamate 312.

This sequence belongs to the IspG family. [4Fe-4S] cluster serves as cofactor.

It carries out the reaction (2E)-4-hydroxy-3-methylbut-2-enyl diphosphate + oxidized [flavodoxin] + H2O + 2 H(+) = 2-C-methyl-D-erythritol 2,4-cyclic diphosphate + reduced [flavodoxin]. The protein operates within isoprenoid biosynthesis; isopentenyl diphosphate biosynthesis via DXP pathway; isopentenyl diphosphate from 1-deoxy-D-xylulose 5-phosphate: step 5/6. Its function is as follows. Converts 2C-methyl-D-erythritol 2,4-cyclodiphosphate (ME-2,4cPP) into 1-hydroxy-2-methyl-2-(E)-butenyl 4-diphosphate. In Salmonella gallinarum (strain 287/91 / NCTC 13346), this protein is 4-hydroxy-3-methylbut-2-en-1-yl diphosphate synthase (flavodoxin).